A 394-amino-acid chain; its full sequence is MDAATLTYDSLRFGEIEDFPETSDPVWILGKQFSALTEKDDILADVTSRLWFTYRKNFQPIGGTGPTSDTGWGCMLRCGQMILGEALICRHLGRDWKWSPGQRQRPEYVSILNAFIDKKDSYYSIHQIAQMGVGEGKSIGQWYGPNTVAQVLKKLAVFDSWSRLAVHVAMDNTVVIEEIKRLCMPWLDFDRGACAVSEEPREMNGDLEGACALAEEETALWKPLVLLIPLRLGLSDINEAYIEPLKQCFMMPQSLGVIGGKPNSAHYFIGFVGDELIYLDPHTTQPAVDPSEDGHFPDDSYHCQHPPCRMHICELDPSIAAGFFCQTEDDFDDWCAQIRKVSNCRGLPMFELVDSQPSHLITADVLNLTPDFSDSDRLERFFDSEDEEFEILSL.

The Nucleophile role is filled by C74. Residues D280 and H282 contribute to the active site. The LIR signature appears at 389-392 (FEIL).

The protein belongs to the peptidase C54 family.

It localises to the cytoplasm. The protein resides in the cytosol. The protein localises to the cytoplasmic vesicle. Its subcellular location is the autophagosome. It is found in the endoplasmic reticulum. It localises to the mitochondrion. The catalysed reaction is [protein]-C-terminal L-amino acid-glycyl-phosphatidylethanolamide + H2O = [protein]-C-terminal L-amino acid-glycine + a 1,2-diacyl-sn-glycero-3-phosphoethanolamine. The enzyme catalyses [protein]-C-terminal L-amino acid-glycyl-phosphatidylserine + H2O = [protein]-C-terminal L-amino acid-glycine + a 1,2-diacyl-sn-glycero-3-phospho-L-serine. Functionally, cysteine protease that plays a key role in autophagy by mediating both proteolytic activation and delipidation of ATG8 family proteins. Required for canonical autophagy (macroautophagy), non-canonical autophagy as well as for mitophagy. The protease activity is required for proteolytic activation of ATG8 family proteins: cleaves the C-terminal amino acid of ATG8 proteins to reveal a C-terminal glycine. Exposure of the glycine at the C-terminus is essential for ATG8 proteins conjugation to phosphatidylethanolamine (PE) and insertion to membranes, which is necessary for autophagy. Protease activity is also required to counteract formation of high-molecular weight conjugates of ATG8 proteins (ATG8ylation): acts as a deubiquitinating-like enzyme that removes ATG8 conjugated to other proteins, such as ATG3. In addition to the protease activity, also mediates delipidation of ATG8 family proteins. Catalyzes delipidation of PE-conjugated forms of ATG8 proteins during macroautophagy. Also involved in non-canonical autophagy, a parallel pathway involving conjugation of ATG8 proteins to single membranes at endolysosomal compartments, by catalyzing delipidation of ATG8 proteins conjugated to phosphatidylserine (PS). This is Cysteine protease ATG4B from Danio rerio (Zebrafish).